We begin with the raw amino-acid sequence, 310 residues long: Ferredoxin--NADP reductase (310 aa).

FAD is bound by residues Asp26, Gln34, Tyr39, Val78, Phe108, Asp268, and Thr308.

This sequence belongs to the ferredoxin--NADP reductase type 2 family. Homodimer. Requires FAD as cofactor.

It carries out the reaction 2 reduced [2Fe-2S]-[ferredoxin] + NADP(+) + H(+) = 2 oxidized [2Fe-2S]-[ferredoxin] + NADPH. This is Ferredoxin--NADP reductase from Lactobacillus helveticus (strain DPC 4571).